Reading from the N-terminus, the 337-residue chain is Ral GTPase-activating protein subunit alpha-1 (337 aa).

In terms of assembly, component of the heterodimeric RalGAP1 complex with RALGAPB. Heterodimerization is required for activity. Interacts with the HLH region of TCF3/isoform E12.

The protein resides in the cytoplasm. Its subcellular location is the nucleus. In terms of biological role, catalytic subunit of the heterodimeric RalGAP1 complex which acts as a GTPase activator for the Ras-like small GTPases RALA and RALB. This is Ral GTPase-activating protein subunit alpha-1 from Sus scrofa (Pig).